Consider the following 314-residue polypeptide: Acetaldehyde dehydrogenase 2 (314 aa).

11-14 provides a ligand contact to NAD(+); the sequence is SGNI. The active-site Acyl-thioester intermediate is cysteine 129. Residues 160–168 and asparagine 291 contribute to the NAD(+) site; that span reads SAGPGTRAN.

It belongs to the acetaldehyde dehydrogenase family.

The enzyme catalyses acetaldehyde + NAD(+) + CoA = acetyl-CoA + NADH + H(+). The polypeptide is Acetaldehyde dehydrogenase 2 (Rhodococcus erythropolis (strain PR4 / NBRC 100887)).